The chain runs to 266 residues: Ubiquinone biosynthesis protein COQ4 homolog, mitochondrial (266 aa).

Residues histidine 169, aspartate 170, histidine 173, and glutamate 185 each contribute to the Zn(2+) site.

It belongs to the COQ4 family. As to quaternary structure, component of a multi-subunit COQ enzyme complex. Zn(2+) serves as cofactor.

The protein localises to the mitochondrion inner membrane. It catalyses the reaction a 4-hydroxy-3-methoxy-5-(all-trans-polyprenyl)benzoate + H(+) = a 2-methoxy-6-(all-trans-polyprenyl)phenol + CO2. It functions in the pathway cofactor biosynthesis; ubiquinone biosynthesis. Lyase that catalyzes the C1-decarboxylation of 4-hydroxy-3-methoxy-5-(all-trans-polyprenyl)benzoic acid into 2-methoxy-6-(all-trans-polyprenyl)phenol during ubiquinone biosynthesis. The protein is Ubiquinone biosynthesis protein COQ4 homolog, mitochondrial of Drosophila ananassae (Fruit fly).